Reading from the N-terminus, the 200-residue chain is Small ribosomal subunit protein uS4 (200 aa).

Residues threonine 22–arginine 42 are disordered. The S4 RNA-binding domain maps to serine 92–lysine 152.

It belongs to the universal ribosomal protein uS4 family. In terms of assembly, part of the 30S ribosomal subunit. Contacts protein S5. The interaction surface between S4 and S5 is involved in control of translational fidelity.

One of the primary rRNA binding proteins, it binds directly to 16S rRNA where it nucleates assembly of the body of the 30S subunit. Functionally, with S5 and S12 plays an important role in translational accuracy. This Geobacillus kaustophilus (strain HTA426) protein is Small ribosomal subunit protein uS4.